The chain runs to 79 residues: Beta-defensin 130 (79 aa).

The N-terminal stretch at 1 to 22 (MKLHSLISVLLLFVTLIPKGKT) is a signal peptide. Disulfide bonds link Cys38–Cys53 and Cys43–Cys60.

This sequence belongs to the beta-defensin family.

The protein resides in the secreted. Its function is as follows. Antimicrobial host-defense peptide. This Pan troglodytes (Chimpanzee) protein is Beta-defensin 130.